A 407-amino-acid chain; its full sequence is Multifunctional CCA protein (407 aa).

Positions 8 and 11 each coordinate ATP. CTP-binding residues include Gly-8 and Arg-11. Mg(2+) contacts are provided by Asp-21 and Asp-23. ATP contacts are provided by Arg-91, Arg-137, and Arg-140. Positions 91, 137, and 140 each coordinate CTP. An HD domain is found at 228 to 329 (TGIHTLLVAE…VKIFNKLDVW (102 aa)).

The protein belongs to the tRNA nucleotidyltransferase/poly(A) polymerase family. Bacterial CCA-adding enzyme type 1 subfamily. As to quaternary structure, monomer. Can also form homodimers and oligomers. The cofactor is Mg(2+). Ni(2+) is required as a cofactor.

It carries out the reaction a tRNA precursor + 2 CTP + ATP = a tRNA with a 3' CCA end + 3 diphosphate. It catalyses the reaction a tRNA with a 3' CCA end + 2 CTP + ATP = a tRNA with a 3' CCACCA end + 3 diphosphate. In terms of biological role, catalyzes the addition and repair of the essential 3'-terminal CCA sequence in tRNAs without using a nucleic acid template. Adds these three nucleotides in the order of C, C, and A to the tRNA nucleotide-73, using CTP and ATP as substrates and producing inorganic pyrophosphate. tRNA 3'-terminal CCA addition is required both for tRNA processing and repair. Also involved in tRNA surveillance by mediating tandem CCA addition to generate a CCACCA at the 3' terminus of unstable tRNAs. While stable tRNAs receive only 3'-terminal CCA, unstable tRNAs are marked with CCACCA and rapidly degraded. The polypeptide is Multifunctional CCA protein (Vibrio vulnificus (strain CMCP6)).